Here is a 346-residue protein sequence, read N- to C-terminus: Phenylalanine--tRNA ligase alpha subunit (346 aa).

Position 261 (Glu261) interacts with Mg(2+).

This sequence belongs to the class-II aminoacyl-tRNA synthetase family. Phe-tRNA synthetase alpha subunit type 1 subfamily. As to quaternary structure, tetramer of two alpha and two beta subunits. Requires Mg(2+) as cofactor.

It is found in the cytoplasm. The catalysed reaction is tRNA(Phe) + L-phenylalanine + ATP = L-phenylalanyl-tRNA(Phe) + AMP + diphosphate + H(+). The chain is Phenylalanine--tRNA ligase alpha subunit from Streptococcus agalactiae serotype Ia (strain ATCC 27591 / A909 / CDC SS700).